We begin with the raw amino-acid sequence, 129 residues long: MSWLDQITWTDDGLVPVIAQEWQSNDVLMFAWMNREALALTAQRGEAVYWSRSRGRLWHKGEESGHVQRVHEIRIDCDADVVLLKVEQLGHQPGIACHTGRHSCFFQLLKDGAWQSVEPVLKDPSSIYK.

Position 76 (Asp-76) interacts with Mg(2+). Cys-77 is a Zn(2+) binding site. Mg(2+)-binding residues include Asp-78 and Asp-80. Zn(2+) is bound by residues Cys-97 and Cys-104.

Belongs to the PRA-CH family. In terms of assembly, homodimer. Mg(2+) serves as cofactor. The cofactor is Zn(2+).

The protein resides in the cytoplasm. It catalyses the reaction 1-(5-phospho-beta-D-ribosyl)-5'-AMP + H2O = 1-(5-phospho-beta-D-ribosyl)-5-[(5-phospho-beta-D-ribosylamino)methylideneamino]imidazole-4-carboxamide. It participates in amino-acid biosynthesis; L-histidine biosynthesis; L-histidine from 5-phospho-alpha-D-ribose 1-diphosphate: step 3/9. Its function is as follows. Catalyzes the hydrolysis of the adenine ring of phosphoribosyl-AMP. The sequence is that of Phosphoribosyl-AMP cyclohydrolase from Leptothrix cholodnii (strain ATCC 51168 / LMG 8142 / SP-6) (Leptothrix discophora (strain SP-6)).